The primary structure comprises 215 residues: Cytochrome b6 (215 aa).

The helical transmembrane segment at 32–52 threads the bilayer; the sequence is IFYCLGGITLTCFLVQVATGF. Cysteine 35 lines the heme c pocket. Residues histidine 86 and histidine 100 each contribute to the heme b site. Transmembrane regions (helical) follow at residues 90-110, 116-136, and 186-206; these read ASMMVLMMILHVFRVYLTGGF, LTWVTGVILAVLTVSFGVTGY, and LHTFVSPLLTAVFMLMHFLMI. Heme b contacts are provided by histidine 187 and histidine 202.

This sequence belongs to the cytochrome b family. PetB subfamily. As to quaternary structure, the 4 large subunits of the cytochrome b6-f complex are cytochrome b6, subunit IV (17 kDa polypeptide, PetD), cytochrome f and the Rieske protein, while the 4 small subunits are PetG, PetL, PetM and PetN. The complex functions as a dimer. Requires heme b as cofactor. The cofactor is heme c.

It is found in the plastid. It localises to the chloroplast thylakoid membrane. Its function is as follows. Component of the cytochrome b6-f complex, which mediates electron transfer between photosystem II (PSII) and photosystem I (PSI), cyclic electron flow around PSI, and state transitions. This is Cytochrome b6 from Huperzia lucidula (Shining clubmoss).